The chain runs to 122 residues: Large ribosomal subunit protein uL14 (122 aa).

Belongs to the universal ribosomal protein uL14 family. In terms of assembly, part of the 50S ribosomal subunit. Forms a cluster with proteins L3 and L19. In the 70S ribosome, L14 and L19 interact and together make contacts with the 16S rRNA in bridges B5 and B8.

Binds to 23S rRNA. Forms part of two intersubunit bridges in the 70S ribosome. The protein is Large ribosomal subunit protein uL14 of Roseiflexus castenholzii (strain DSM 13941 / HLO8).